A 190-amino-acid polypeptide reads, in one-letter code: Putative manganese efflux pump MntP (190 aa).

Helical transmembrane passes span 5-25 (ALLALAVALAMDALAVAVATG), 41-61 (WHFGLFQAAMPIAGWFMGQGI), 64-84 (FVDAWAHWIAFGLLAFIGLKM), 105-125 (TSLIMLSVATSIDALAVGVTL), 127-147 (MLGLSIWMPAAVIGLVCLGLT), and 169-189 (ILGGAVLLGIGFKILHESGVF).

It belongs to the MntP (TC 9.B.29) family.

Its subcellular location is the cell inner membrane. Functionally, probably functions as a manganese efflux pump. This Oleidesulfovibrio alaskensis (strain ATCC BAA-1058 / DSM 17464 / G20) (Desulfovibrio alaskensis) protein is Putative manganese efflux pump MntP.